Here is a 67-residue protein sequence, read N- to C-terminus: Small ribosomal subunit protein bS21 (67 aa).

It belongs to the bacterial ribosomal protein bS21 family.

In Aquifex aeolicus (strain VF5), this protein is Small ribosomal subunit protein bS21 (rpsU).